The sequence spans 645 residues: ATP-dependent zinc metalloprotease FtsH 3 (645 aa).

Residues 1-11 (MQNKRNQSRVL) are Cytoplasmic-facing. Residues 12–32 (WLLLIYITIGIFIYVGVNSLI) traverse the membrane as a helical segment. The Periplasmic portion of the chain corresponds to 33–110 (GTPDVSKIEY…YVRSLENSWW (78 aa)). Residues 111–131 (ISILTFLLPVFLLIFLFTFLF) form a helical membrane-spanning segment. At 132–645 (RSSGGGANQG…ENNLIERKGI (514 aa)) the chain is on the cytoplasmic side. 202–209 (GEPGTGKT) contacts ATP. His424 contacts Zn(2+). Glu425 is an active-site residue. Zn(2+) is bound by residues His428 and Asp501.

It in the central section; belongs to the AAA ATPase family. This sequence in the C-terminal section; belongs to the peptidase M41 family. In terms of assembly, homohexamer. It depends on Zn(2+) as a cofactor.

The protein resides in the cell inner membrane. Its function is as follows. Acts as a processive, ATP-dependent zinc metallopeptidase for both cytoplasmic and membrane proteins. Plays a role in the quality control of integral membrane proteins. The protein is ATP-dependent zinc metalloprotease FtsH 3 of Petrotoga mobilis (strain DSM 10674 / SJ95).